We begin with the raw amino-acid sequence, 632 residues long: Probable potassium transport system protein Kup 1 (632 aa).

12 helical membrane passes run 17-37 (LFYLALGSVGVVYGDIGTSPL), 60-80 (LISLMIWALTIIVTIKYVLFL), 106-126 (TALLMLLGLMGAALFLGDAMI), 144-164 (PSLAEYIVPISVVILALLFVV), 175-195 (FFGPITAVWFLVMAAAGISHI), 210-230 (AVSFLLHEGFYGVVVLGAVFL), 254-274 (WFLLVFPALTLNYLGQGALVL), 292-312 (ALLPVVILATAATIIASQAVI), 344-364 (IFLPSVNAVLFFGVIFLVLSF), 370-390 (LATAYGISVTGAMVVTSIMAF), 401-421 (LPVAVIALAPLVVLEMIFLGA), and 426-446 (IHDGGYIPILIATAFTVVMWT).

Belongs to the HAK/KUP transporter (TC 2.A.72) family.

The protein localises to the cell inner membrane. The enzyme catalyses K(+)(in) + H(+)(in) = K(+)(out) + H(+)(out). Transport of potassium into the cell. Likely operates as a K(+):H(+) symporter. This is Probable potassium transport system protein Kup 1 from Rhizobium etli (strain ATCC 51251 / DSM 11541 / JCM 21823 / NBRC 15573 / CFN 42).